We begin with the raw amino-acid sequence, 620 residues long: MPSERCLSIQEMLTGQRLCHSESHNDSVLAALNQQRSDGILCDITLIAEEQKFHAHKAVLAACSDYFRAMFSLCMVESGADEVNLHGVTSLGLKQALEFAYTGQILLEPGVIQDVLAAGSHLQLLELLNLCSHYLIQELNSFNYLDLYRLADLFNLTLLEKAVIDFLVKHLSELLKSRPEEVLTLPYCLLQEVLKSDRLTSLSEEQIWQLAVRWLEHNCHYQYMDELLQYIRFGLMDVDTLHTVALSHPLVQASETATALVNEALEYHQSIYAQPVWQTRRTKPRFQSDTLYIIGGKKREVCKVKELRYFNPVDQENALIAAIANWSELAPMPVGRSHHCVAVMGDFLFVAGGEVEHASGRTCAVRTACRYDPRSNSWAEIAPMKNCREHFVLGAMEEYLYAVGGRNELRQVLPTVERYCPKKNKWTFVQSFDRSLSCHAGYVADGLLWISGGVTNTAQYQNRLMVYEPNQNKWISRSPMLQRRVYHSMAAVQRKLYVLGGNDLDYNNDRILVRHIDSYNIDTDQWTRCNFNLLTGQNESGVAVHNGRIYLVGGYSIWTNEPLACIQVLDVSREGKEEVFYGPTLPFASNGIAACFLPAPYFTCPNLQTLQVPHHRIGTI.

Residues 42–109 (CDITLIAEEQ…AYTGQILLEP (68 aa)) form the BTB domain. 6 Kelch repeats span residues 290-346 (TLYI…VMGD), 347-398 (FLFV…AMEE), 399-446 (YLYA…VADG), 447-494 (LLWI…AVQR), 496-547 (LYVL…VHNG), and 549-599 (IYLV…FLPA).

The chain is Kelch-like protein 32 (KLHL32) from Homo sapiens (Human).